The chain runs to 242 residues: Galectin-3 (242 aa).

The tract at residues 1–35 is disordered; it reads MADGFSLNDALSGSGHPPNQGWPGPWGNQPAGPGG. Position 2 is an N-acetylalanine (A2). S6 carries the post-translational modification Phosphoserine; by CK1. S12 carries the post-translational modification Phosphoserine. Over residues 17–31 the composition is skewed to low complexity; sequence PPNQGWPGPWGNQPA. A run of 4 repeats spans residues 35–43, 44–52, 53–61, and 62–70. Residues 35–98 are 7 X 9 AA tandem repeats of Y-P-G-X(3)-P-[GS]-A; the sequence is GYPGAAYPGA…GAGAYPGASP (64 aa). The disordered stretch occupies residues 55–93; sequence GQAPPGPYPGPGAHGAYPGQPGGPGAYPSPGQPSGAGAY. The stretch at 71–80 is one 5; approximate repeat; sequence YPGQPGGPGA. Over residues 80-93 the composition is skewed to low complexity; the sequence is AYPSPGQPSGAGAY. The stretch at 81–92 is one 6; approximate repeat; the sequence is YPSPGQPSGAGA. The 7; truncated repeat unit spans residues 93–98; that stretch reads YPGASP. Residues 110 to 240 enclose the Galectin domain; the sequence is YDLPLPGGVM…DIQLTSASHA (131 aa). A beta-D-galactoside is bound at residue 173–181; the sequence is WGREERQTT. The Nuclear export signal signature appears at 218 to 233; it reads RNLKEINKLGISGDIQ.

In terms of assembly, probably forms homo- or heterodimers. Interacts with DMBT1. Interacts with CD6 and ALCAM. Forms a complex with the ITGA3, ITGB1 and CSPG4. Interacts with LGALS3BP, LYPD3, ZFTRAF1 and UACA. Interacts with TRIM16; this interaction mediates autophagy of damage endomembranes. Interacts with cargo receptor TMED10; the interaction mediates the translocation from the cytoplasm into the ERGIC (endoplasmic reticulum-Golgi intermediate compartment) and thereby secretion. Interacts with and inhibits by binding NCR3/NKp30.

The protein resides in the cytoplasm. It is found in the nucleus. The protein localises to the secreted. Galactose-specific lectin which binds IgE. May mediate with the alpha-3, beta-1 integrin the stimulation by CSPG4 of endothelial cells migration. Together with DMBT1, required for terminal differentiation of columnar epithelial cells during early embryogenesis. In the nucleus: acts as a pre-mRNA splicing factor. Involved in acute inflammatory responses including neutrophil activation and adhesion, chemoattraction of monocytes macrophages, opsonization of apoptotic neutrophils, and activation of mast cells. Together with TRIM16, coordinates the recognition of membrane damage with mobilization of the core autophagy regulators ATG16L1 and BECN1 in response to damaged endomembranes. When secreted, interacts with NK cell-activating receptor NCR3/NKp30 acting as an inhibitory ligand which antagonizes NK cell attack. The chain is Galectin-3 (LGALS3) from Oryctolagus cuniculus (Rabbit).